We begin with the raw amino-acid sequence, 362 residues long: Cytochrome P450 monooxygenase-like protein avaN (362 aa).

Residues 3-23 (VILAIFIAAAGCLFSSWRIYW) form a helical membrane-spanning segment.

Belongs to the cytochrome P450 family.

The protein localises to the membrane. The protein operates within secondary metabolite biosynthesis. Cytochrome P450 monooxygenase-like protein; part of the cluster that mediates the biosynthesis of a highly modified cyclo-arginine-tryptophan dipeptide (cRW). The first step of the pathway is perfornmed by the arginine-containing cyclodipeptide synthase (RCPDS) avaA that acts as the scaffold-generating enzyme and is responsible for formation of the cyclo-Arg-Trp (cRW) diketopiperazine. AvaB then acts as a multifunctional flavoenzyme that is responsible for generating the cyclo-Arg-formylkynurenine DKP, which can be deformylated by avaC. AvaB then further catalyzes an additional N-oxidation followed by cyclization and dehydration. The next step is an N-acetylation of the guanidine group catalyzed by the arginine N-acetyltransferase avaD. The roles of the additional enzymes identified within the ava cluster still have to be determined. In Aspergillus versicolor, this protein is Cytochrome P450 monooxygenase-like protein avaN.